Consider the following 268-residue polypeptide: Putative cysteine-rich repeat secretory protein 5 (268 aa).

Positions 1 to 24 are cleaved as a signal peptide; the sequence is MTGINTHFAVALFCFFSFSLRAMS. Gnk2-homologous domains are found at residues 27–129 and 135–248; these read SQML…NVSF and DVPS…ISAL.

The protein belongs to the cysteine-rich repeat secretory protein family.

It is found in the secreted. The polypeptide is Putative cysteine-rich repeat secretory protein 5 (CRRSP5) (Arabidopsis thaliana (Mouse-ear cress)).